Here is a 160-residue protein sequence, read N- to C-terminus: Arsenate reductase 2.1 (160 aa).

In terms of domain architecture, Rhodanese spans 42 to 143 (SNPRVAIIDV…WELSGQPVCR (102 aa)). Cys-94 serves as the catalytic Cysteine persulfide intermediate.

It carries out the reaction [glutaredoxin]-dithiol + arsenate + glutathione + H(+) = glutathionyl-S-S-[glutaredoxin] + arsenite + H2O. Its function is as follows. Possesses arsenate reductase activity in vitro. Catalyzes the reduction of arsenate [As(V)] to arsenite [As(III)]. May play a role in arsenic retention in roots. Functionally, possesses phosphatase activity towards p-nitrophenyl phosphate in vitro. The sequence is that of Arsenate reductase 2.1 (ACR2.1) from Oryza sativa subsp. japonica (Rice).